The chain runs to 699 residues: Transketolase (699 aa).

Histidine 45 contacts substrate. Residues threonine 48, histidine 85, and 133–135 each bind thiamine diphosphate; that span reads GPL. Aspartate 177 is a binding site for Mg(2+). Thiamine diphosphate-binding residues include glycine 178 and asparagine 207. 2 residues coordinate Mg(2+): asparagine 207 and isoleucine 209. Residues histidine 283, arginine 378, and serine 405 each contribute to the substrate site. Histidine 283 serves as a coordination point for thiamine diphosphate. Catalysis depends on glutamate 441, which acts as the Proton donor. Thiamine diphosphate is bound at residue phenylalanine 467. Positions 491, 499, and 552 each coordinate substrate.

Belongs to the transketolase family. Homodimer. The cofactor is Mg(2+). Ca(2+) is required as a cofactor. Requires Mn(2+) as cofactor. It depends on Co(2+) as a cofactor. Thiamine diphosphate serves as cofactor.

The enzyme catalyses D-sedoheptulose 7-phosphate + D-glyceraldehyde 3-phosphate = aldehydo-D-ribose 5-phosphate + D-xylulose 5-phosphate. Its function is as follows. Catalyzes the transfer of a two-carbon ketol group from a ketose donor to an aldose acceptor, via a covalent intermediate with the cofactor thiamine pyrophosphate. The chain is Transketolase (tkt) from Mycobacterium leprae (strain TN).